A 102-amino-acid polypeptide reads, in one-letter code: RNA-binding protein Hfq (102 aa).

The 60-residue stretch at 9–68 (DPFLNALRRERVPVSIYLVNGIKLQGQIESFDQFVILLKNTVSQMVYKHAISTVVPSRPV) folds into the Sm domain. The segment at 63 to 102 (VPSRPVSHHSNNAGGGTSSNYHHGSSPQNTSAQQDSEETE) is disordered. A compositionally biased stretch (polar residues) spans 70–96 (HHSNNAGGGTSSNYHHGSSPQNTSAQQ).

It belongs to the Hfq family. As to quaternary structure, homohexamer.

Functionally, RNA chaperone that binds small regulatory RNA (sRNAs) and mRNAs to facilitate mRNA translational regulation in response to envelope stress, environmental stress and changes in metabolite concentrations. Also binds with high specificity to tRNAs. This Shigella dysenteriae serotype 1 (strain Sd197) protein is RNA-binding protein Hfq.